Here is a 698-residue protein sequence, read N- to C-terminus: Elongation factor G 1 (698 aa).

The tr-type G domain occupies Glu-8–Val-290. GTP is bound by residues Ala-17 to Thr-24, Asp-88 to His-92, and Asn-142 to Asp-145.

Belongs to the TRAFAC class translation factor GTPase superfamily. Classic translation factor GTPase family. EF-G/EF-2 subfamily.

The protein localises to the cytoplasm. Catalyzes the GTP-dependent ribosomal translocation step during translation elongation. During this step, the ribosome changes from the pre-translocational (PRE) to the post-translocational (POST) state as the newly formed A-site-bound peptidyl-tRNA and P-site-bound deacylated tRNA move to the P and E sites, respectively. Catalyzes the coordinated movement of the two tRNA molecules, the mRNA and conformational changes in the ribosome. The protein is Elongation factor G 1 of Shewanella oneidensis (strain ATCC 700550 / JCM 31522 / CIP 106686 / LMG 19005 / NCIMB 14063 / MR-1).